Consider the following 520-residue polypeptide: Peptide chain release factor 3 (520 aa).

One can recognise a tr-type G domain in the interval 8 to 277 (ESRKTFAIIS…FAPMPNARQT (270 aa)). GTP-binding positions include 17-24 (SHPDAGKT), 85-89 (DTPGH), and 139-142 (NKLD).

The protein belongs to the TRAFAC class translation factor GTPase superfamily. Classic translation factor GTPase family. PrfC subfamily.

It is found in the cytoplasm. Functionally, increases the formation of ribosomal termination complexes and stimulates activities of RF-1 and RF-2. It binds guanine nucleotides and has strong preference for UGA stop codons. It may interact directly with the ribosome. The stimulation of RF-1 and RF-2 is significantly reduced by GTP and GDP, but not by GMP. The sequence is that of Peptide chain release factor 3 from Staphylococcus aureus (strain MRSA252).